We begin with the raw amino-acid sequence, 82 residues long: UPF0337 protein PP_2059 (82 aa).

Belongs to the UPF0337 (CsbD) family.

This Pseudomonas putida (strain ATCC 47054 / DSM 6125 / CFBP 8728 / NCIMB 11950 / KT2440) protein is UPF0337 protein PP_2059.